The sequence spans 87 residues: Putative defensin-like protein 169 (87 aa).

The signal sequence occupies residues 1–21 (MKKTFSFTVLILFVIPLLVTG). Intrachain disulfides connect Cys-36-Cys-86, Cys-48-Cys-74, Cys-53-Cys-80, and Cys-57-Cys-82.

The protein belongs to the DEFL family.

The protein resides in the secreted. In Arabidopsis thaliana (Mouse-ear cress), this protein is Putative defensin-like protein 169.